Consider the following 448-residue polypeptide: N-succinylarginine dihydrolase (448 aa).

Substrate-binding positions include 19-28 (GGLSYGNVAS), asparagine 110, and 137-138 (HR). Glutamate 174 is a catalytic residue. Arginine 214 is a binding site for substrate. The active site involves histidine 250. Positions 252 and 365 each coordinate substrate. Cysteine 371 (nucleophile) is an active-site residue.

This sequence belongs to the succinylarginine dihydrolase family. In terms of assembly, homodimer.

It carries out the reaction N(2)-succinyl-L-arginine + 2 H2O + 2 H(+) = N(2)-succinyl-L-ornithine + 2 NH4(+) + CO2. The protein operates within amino-acid degradation; L-arginine degradation via AST pathway; L-glutamate and succinate from L-arginine: step 2/5. Catalyzes the hydrolysis of N(2)-succinylarginine into N(2)-succinylornithine, ammonia and CO(2). The protein is N-succinylarginine dihydrolase of Pseudomonas aeruginosa (strain LESB58).